The following is a 116-amino-acid chain: Large ribosomal subunit protein bL17 (116 aa).

Belongs to the bacterial ribosomal protein bL17 family. Part of the 50S ribosomal subunit. Contacts protein L32.

This chain is Large ribosomal subunit protein bL17, found in Sulfurimonas denitrificans (strain ATCC 33889 / DSM 1251) (Thiomicrospira denitrificans (strain ATCC 33889 / DSM 1251)).